Reading from the N-terminus, the 113-residue chain is Nitrogenase-stabilizing/protective protein NifW (113 aa).

The protein belongs to the NifW family. As to quaternary structure, homotrimer; associates with NifD.

Its function is as follows. May protect the nitrogenase Fe-Mo protein from oxidative damage. This Polaromonas naphthalenivorans (strain CJ2) protein is Nitrogenase-stabilizing/protective protein NifW.